Reading from the N-terminus, the 148-residue chain is MASKSGSGGLREPPNEQAVLNMYEGKRSELSQIYSNITDLEMQVSEHSLVINAIQPLDQSRKCFRMIGGVLVERTIKEVLPAVQRNKDGLEEVVRKLYETLEKKKKDLTEFEAKYKIRITKQEDNKEGGNKKEGNAQGVLVGAASSSQ.

The stretch at 87 to 114 forms a coiled coil; sequence KDGLEEVVRKLYETLEKKKKDLTEFEAK. Positions 122-134 are enriched in basic and acidic residues; it reads QEDNKEGGNKKEG. A disordered region spans residues 122 to 148; the sequence is QEDNKEGGNKKEGNAQGVLVGAASSSQ.

Belongs to the prefoldin subunit beta family. In terms of assembly, heterohexamer of two PFD-alpha type and four PFD-beta type subunits forming prefoldin co-chaperone complex. Interacts with LSM8, a specific subunit of the LSM2-8 complex, which is a core component of the spliceosome.

It is found in the cytoplasm. The protein localises to the nucleus. Functionally, binds specifically to cytosolic chaperonin (c-CPN) and transfers target proteins to it. Binds to nascent polypeptide chain and promotes folding in an environment in which there are many competing pathways for nonnative proteins. Together with other chaperonins, contribute to the regulation of gene expression by modulating the spliceosome function on pre-mRNA splicing post-transcriptionally by acting as a co-chaperone of Hsp90 to control levels of LSM8. Required for microtubules (MTs) organization and dynamicity. Involved in the process leading to microtubules dissociation in response to gibberellic acid (GA) probably due to the DELLA proteins-mediated translocation of the prefoldin co-chaperone complex from the cytoplasm to the nucleus. This is Prefoldin subunit 2 from Arabidopsis thaliana (Mouse-ear cress).